A 67-amino-acid polypeptide reads, in one-letter code: Archaeal histone HAN1 subunit A (67 aa).

Interaction with DNA regions lie at residues 20 to 22 (RVS) and 54 to 57 (KTVK).

It belongs to the archaeal histone HMF family. As to quaternary structure, heterodimer. Dimers then assemble into higher oligomers, with the DNA wrapped around the protein core.

It localises to the cytoplasm. The protein resides in the chromosome. In terms of biological role, binds and compact DNA (95 to 150 base pairs) to form nucleosome-like structures that contain positive DNA supercoils. Increases the resistance of DNA to thermal denaturation (in vitro). This is Archaeal histone HAN1 subunit A (han1A) from Thermococcus zilligii.